We begin with the raw amino-acid sequence, 112 residues long: cAMP-regulated phosphoprotein 19 (112 aa).

Methionine 1 carries the post-translational modification N-acetylmethionine. The segment covering 1–11 (MSAEVPEAASA) has biased composition (low complexity). The interval 1 to 49 (MSAEVPEAASAEEQKEMEDKVTSPEKAEEAKLKARYPHLGQKPGGSDFL) is disordered. The residue at position 2 (serine 2) is an N-acetylserine. A phosphoserine mark is found at serine 2 and serine 23. Residues 12–32 (EEQKEMEDKVTSPEKAEEAKL) are compositionally biased toward basic and acidic residues. Serine 62 and serine 104 each carry phosphoserine; by GWL. The tract at residues 74–112 (NKQLPAAAPDKTEVTGDHIPTPQDLPQRKPSLVASKLAG) is disordered. Phosphoserine; by PKA is present on serine 104. Lysine 109 carries the post-translational modification N6-acetyllysine.

It belongs to the endosulfine family. In terms of assembly, interacts (when phosphorylated at Ser-62) with PPP2R2D. Interacts with SNCA. Interacts with PPP2R2A; the interaction is direct and this interaction inhibits PP2A activity. Post-translationally, phosphorylation at Ser-62 by MASTL/GWL during mitosis is essential for interaction with PPP2R2D (PR55-delta) and subsequent inactivation of PP2A. Phosphorylated by PKA.

The protein resides in the cytoplasm. Protein phosphatase inhibitor that specifically inhibits protein phosphatase 2A (PP2A) during mitosis. Inhibition of PP2A is enhanced when ARPP19 is phosphorylated. When phosphorylated at Ser-62 during mitosis, specifically interacts with PPP2R2D (PR55-delta) and inhibits its activity, leading to inactivation of PP2A, an essential condition to keep cyclin-B1-CDK1 activity high during M phase. May indirectly enhance GAP-43 expression by binding to the NGF-regulatory region of its mRNA. This is cAMP-regulated phosphoprotein 19 (Arpp19) from Mus musculus (Mouse).